The sequence spans 559 residues: Serine/threonine-protein kinase VRK1 (559 aa).

The 357-residue stretch at 32-388 (YIVGKQFATG…EDDDEEEEVI (357 aa)) folds into the Protein kinase domain. ATP-binding positions include 38-46 (FATGGFGRI) and Lys-61. Asp-167 serves as the catalytic Proton acceptor. 2 disordered regions span residues 315-419 (EAAQ…ATSD) and 448-559 (SSCE…SSEV). Composition is skewed to polar residues over residues 405 to 418 (RSFNLGMTSSTATS) and 449 to 460 (SCESQYESNEPG). Basic and acidic residues predominate over residues 533–542 (TSARYQEKRA). Over residues 545–559 (NTKPTFDDSSCSSEV) the composition is skewed to polar residues.

The protein belongs to the protein kinase superfamily. CK1 Ser/Thr protein kinase family. VRK subfamily. In terms of processing, autophosphorylates in vitro.

The protein localises to the nucleus. The protein resides in the cytoplasm. It is found in the cajal body. It carries out the reaction L-seryl-[protein] + ATP = O-phospho-L-seryl-[protein] + ADP + H(+). The catalysed reaction is L-threonyl-[protein] + ATP = O-phospho-L-threonyl-[protein] + ADP + H(+). Its function is as follows. Serine/threonine kinase that phosphorylates baf-1, thus regulating the association of baf-1 with chromatin and nuclear membrane proteins during nuclear envelope formation. May act through the egl-17 signaling pathway. Essential in hermaphrodites for formation of the vulva, uterus, and uterine seam cells and for development and maintenance of the somatic gonad and thus the germ line. Acts to prevent cep-1 from triggering an inappropriate cell cycle arrest, thereby promoting germ cell proliferation. Regulates anchor cell polarity and the timing of anchor cell invasion through the basement membranes separating vulval and somatic gonadal cells during the L3 larval stage. In Caenorhabditis briggsae, this protein is Serine/threonine-protein kinase VRK1.